Consider the following 179-residue polypeptide: Diphosphoinositol polyphosphate phosphohydrolase 2 (179 aa).

Substrate is bound by residues Arg-9, 17 to 19 (KKR), and 38 to 40 (SSR). Residues 17–143 (KKRAACLCFR…VHAEYLERLK (127 aa)) enclose the Nudix hydrolase domain. Residues Gly-49 and Glu-65 each contribute to the Mg(2+) site. Positions 50-71 (GGVEPEEEPGGAAAREVYEEAG) match the Nudix box motif. The Proton acceptor role is filled by Glu-68. Position 69 (Glu-69) interacts with Mg(2+). Residues 88–90 (RKH), Arg-114, and Lys-132 each bind substrate.

Belongs to the Nudix hydrolase family. DIPP subfamily. It depends on Mg(2+) as a cofactor. Mn(2+) serves as cofactor.

It localises to the cytoplasm. The catalysed reaction is diphospho-myo-inositol polyphosphate + H2O = myo-inositol polyphosphate + phosphate.. It carries out the reaction 5-diphospho-1D-myo-inositol 1,2,3,4,6-pentakisphosphate + H2O = 1D-myo-inositol hexakisphosphate + phosphate + H(+). It catalyses the reaction 3,5-bis(diphospho)-1D-myo-inositol 1,2,4,6-tetrakisphosphate + H2O = 3-diphospho-1D-myo-inositol 1,2,4,5,6-pentakisphosphate + phosphate + 2 H(+). The enzyme catalyses 5-diphospho-1D-myo-inositol 1,3,4,6-tetrakisphosphate + H2O = 1D-myo-inositol 1,3,4,5,6-pentakisphosphate + phosphate + H(+). The catalysed reaction is P(1),P(6)-bis(5'-adenosyl) hexaphosphate + H2O = 2 ATP + 2 H(+). It carries out the reaction P(1),P(5)-bis(5'-adenosyl) pentaphosphate + H2O = ADP + ATP + 2 H(+). It catalyses the reaction 5-phospho-alpha-D-ribose 1-diphosphate + H2O = alpha-D-ribose 1,5-bisphosphate + phosphate + H(+). Functionally, cleaves the beta-phosphate from diphosphoinositol polyphosphates such as PP-InsP5 (diphosphoinositol pentakisphosphate), PP-InsP4 (diphosphoinositol tetrakisphosphate) and [PP]2-InsP4 (bisdiphosphoinositol tetrakisphosphate), suggesting that it may play a role in signal transduction. Diadenosine polyphosphates, particularly Ap6A (P(1),P(6)-bis(5a-adenosyl) hexaphosphate) and Ap5A (P(1),P(5)-bis(5'-adenosyl) pentaphosphate) are downstream effectors of a signaling cascade that regulates cardiac KATP channels, can also be substrates, although with lower preference than the diphosphoinositol polyphosphates. Can also catalyze the hydrolysis of 5-phosphoribose 1-diphosphate, generating the glycolytic activator ribose 1,5-bisphosphate. Does not play a role in U8 snoRNA decapping activity. Binds U8 snoRNA. The chain is Diphosphoinositol polyphosphate phosphohydrolase 2 from Rattus norvegicus (Rat).